We begin with the raw amino-acid sequence, 321 residues long: Gibberellin 2-beta-dioxygenase 4 (321 aa).

In terms of domain architecture, Fe2OG dioxygenase spans 156-269; the sequence is DSDSVLRVNH…RLSTAYFAGP (114 aa). His-193, Asp-195, and His-250 together coordinate Fe cation. Arg-260 is a catalytic residue.

This sequence belongs to the iron/ascorbate-dependent oxidoreductase family. GA2OX subfamily. Fe(2+) serves as cofactor. As to expression, expressed at the base of the shoot apical meristem and developing leaf primordia.

The enzyme catalyses gibberellin A1 + 2-oxoglutarate + O2 = gibberellin A8 + succinate + CO2. It participates in plant hormone biosynthesis; gibberellin biosynthesis. Functionally, catalyzes the 2-beta-hydroxylation of several biologically active gibberellins, leading to the homeostatic regulation of their endogenous level. Catabolism of gibberellins (GAs) plays a central role in plant development. Converts GA9/GA20 to GA51/GA29 and GA4/GA1 to GA34/GA8. This chain is Gibberellin 2-beta-dioxygenase 4 (GA2OX4), found in Arabidopsis thaliana (Mouse-ear cress).